We begin with the raw amino-acid sequence, 380 residues long: Chaperone protein DnaJ (380 aa).

Residues 5–69 (DYYEILGVSK…QKRAHYDQFG (65 aa)) form the J domain. The CR-type zinc-finger motif lies at 135–217 (GKETDIEIPS…CGGTGRVKRR (83 aa)). Zn(2+)-binding residues include C148, C151, C165, C168, C191, C194, C205, and C208. CXXCXGXG motif repeat units lie at residues 148–155 (CNTCHGTG), 165–172 (CPHCHGAG), 191–198 (CPYCGGTG), and 205–212 (CTTCGGTG).

The protein belongs to the DnaJ family. In terms of assembly, homodimer. The cofactor is Zn(2+).

The protein resides in the cytoplasm. Participates actively in the response to hyperosmotic and heat shock by preventing the aggregation of stress-denatured proteins and by disaggregating proteins, also in an autonomous, DnaK-independent fashion. Unfolded proteins bind initially to DnaJ; upon interaction with the DnaJ-bound protein, DnaK hydrolyzes its bound ATP, resulting in the formation of a stable complex. GrpE releases ADP from DnaK; ATP binding to DnaK triggers the release of the substrate protein, thus completing the reaction cycle. Several rounds of ATP-dependent interactions between DnaJ, DnaK and GrpE are required for fully efficient folding. Also involved, together with DnaK and GrpE, in the DNA replication of plasmids through activation of initiation proteins. This is Chaperone protein DnaJ from Geobacillus stearothermophilus (Bacillus stearothermophilus).